Consider the following 264-residue polypeptide: Thymidylate synthase (264 aa).

Residue arginine 21 participates in dUMP binding. Histidine 51 is a (6R)-5,10-methylene-5,6,7,8-tetrahydrofolate binding site. 126 to 127 contributes to the dUMP binding site; that stretch reads RR. Cysteine 146 (nucleophile) is an active-site residue. DUMP contacts are provided by residues 166–169, asparagine 177, and 207–209; these read RSAD and HIY. Aspartate 169 is a (6R)-5,10-methylene-5,6,7,8-tetrahydrofolate binding site. Alanine 263 contacts (6R)-5,10-methylene-5,6,7,8-tetrahydrofolate.

Belongs to the thymidylate synthase family. Bacterial-type ThyA subfamily. Homodimer.

It is found in the cytoplasm. It catalyses the reaction dUMP + (6R)-5,10-methylene-5,6,7,8-tetrahydrofolate = 7,8-dihydrofolate + dTMP. It functions in the pathway pyrimidine metabolism; dTTP biosynthesis. Functionally, catalyzes the reductive methylation of 2'-deoxyuridine-5'-monophosphate (dUMP) to 2'-deoxythymidine-5'-monophosphate (dTMP) while utilizing 5,10-methylenetetrahydrofolate (mTHF) as the methyl donor and reductant in the reaction, yielding dihydrofolate (DHF) as a by-product. This enzymatic reaction provides an intracellular de novo source of dTMP, an essential precursor for DNA biosynthesis. In Porphyromonas gingivalis (strain ATCC BAA-308 / W83), this protein is Thymidylate synthase.